Here is a 121-residue protein sequence, read N- to C-terminus: MKKKYRIKKNEEFQEVFQRGASTANRQFVIYTLDRPEQPYFRIGLSVSKKLGKAVVRNRIKRYIRQCFLELKEEIAPGKDYVVIARQPVAEMNYAEVKKSLIHVLRKSGGLKKGGQPSHSA.

It belongs to the RnpA family. In terms of assembly, consists of a catalytic RNA component (M1 or rnpB) and a protein subunit.

It carries out the reaction Endonucleolytic cleavage of RNA, removing 5'-extranucleotides from tRNA precursor.. Its function is as follows. RNaseP catalyzes the removal of the 5'-leader sequence from pre-tRNA to produce the mature 5'-terminus. It can also cleave other RNA substrates such as 4.5S RNA. The protein component plays an auxiliary but essential role in vivo by binding to the 5'-leader sequence and broadening the substrate specificity of the ribozyme. In Geobacillus kaustophilus (strain HTA426), this protein is Ribonuclease P protein component.